We begin with the raw amino-acid sequence, 320 residues long: Aldose reductase (320 aa).

The active-site Proton donor is Tyr60. Residue His121 participates in substrate binding. 215–269 serves as a coordination point for NADP(+); it reads SPLGSSEKNLAHDPVVEKVANKLNKTPGQVLIKWALQRGTSVIPKSSKDERIKEN.

Belongs to the aldo/keto reductase family.

The catalysed reaction is an alditol + NAD(+) = an aldose + NADH + H(+). It catalyses the reaction an alditol + NADP(+) = an aldose + NADPH + H(+). In Hordeum vulgare (Barley), this protein is Aldose reductase.